The following is a 167-amino-acid chain: MRKIITLVSREQAVIGHRFRVVSIPDECKSCKLYAVCLGKLTPGRSYEVIEIRPSLGQRCKITGEEVVPVVAAELPIVGLVPLNKALEGAIVTFEGECKGCKDCPDNIVKPGEKIKIIRVLGRTRCKDRDFATVEFYILEAPLPSELGAVGTYQDHSRAPLLRRPLK.

It belongs to the UPF0179 family.

This Pyrobaculum islandicum (strain DSM 4184 / JCM 9189 / GEO3) protein is UPF0179 protein Pisl_0688.